The chain runs to 55 residues: Riparin-1.4 (55 aa).

Positions 1–15 (MKIIVVLAVLMLVSA) are cleaved as a signal peptide. The propeptide occupies 16-41 (QVCLVSAAEMGHSSDNELSSRDLVKR). Cysteines 47 and 53 form a disulfide. A propeptide spanning residues 54–55 (NH) is cleaved from the precursor.

As to expression, expressed by the skin glands.

Its subcellular location is the secreted. The protein is Riparin-1.4 of Crinia riparia (Streambank froglet).